Reading from the N-terminus, the 199-residue chain is MIQISDKAQTYFRKLIEREGVPGMGVRLSAVDAGTPRADARLEFAEPADLRGDEWAIDCDGFTLYVVAASVPWMDGAEIDYVTQSTGNQQLTIKAPKIKGEAPAESASMVERVRWVVENEINPQLASHGGRVAVQEVSADGVVLLRFGGGCHGCGMADVTLKQGIEKTLMGRVPGVIAVRDATDHATGDAPYIPRDSAA.

[4Fe-4S] cluster is bound by residues Cys151 and Cys154.

Belongs to the NfuA family. As to quaternary structure, homodimer. The cofactor is [4Fe-4S] cluster.

Its function is as follows. Involved in iron-sulfur cluster biogenesis. Binds a 4Fe-4S cluster, can transfer this cluster to apoproteins, and thereby intervenes in the maturation of Fe/S proteins. Could also act as a scaffold/chaperone for damaged Fe/S proteins. This chain is Fe/S biogenesis protein NfuA, found in Xanthomonas oryzae pv. oryzae (strain PXO99A).